A 273-amino-acid chain; its full sequence is HTH-type transcriptional activator RhaS (273 aa).

In terms of domain architecture, HTH araC/xylS-type spans 174-272 (YQLLDWLQNN…SQSPRDLRSQ (99 aa)). DNA-binding regions (H-T-H motif) lie at residues 191–212 (PELA…KNKT) and 239–262 (VTDI…KREF).

Binds DNA as a dimer.

It localises to the cytoplasm. Functionally, activates expression of the rhaBAD and rhaT operons. This Yersinia pestis bv. Antiqua (strain Angola) protein is HTH-type transcriptional activator RhaS.